A 366-amino-acid chain; its full sequence is tRNA/tmRNA (uracil-C(5))-methyltransferase (366 aa).

The S-adenosyl-L-methionine site is built by glutamine 189, tyrosine 217, asparagine 222, glutamate 238, and aspartate 298. Catalysis depends on cysteine 323, which acts as the Nucleophile. The Proton acceptor role is filled by glutamate 357.

It belongs to the class I-like SAM-binding methyltransferase superfamily. RNA M5U methyltransferase family. TrmA subfamily.

It carries out the reaction uridine(54) in tRNA + S-adenosyl-L-methionine = 5-methyluridine(54) in tRNA + S-adenosyl-L-homocysteine + H(+). It catalyses the reaction uridine(341) in tmRNA + S-adenosyl-L-methionine = 5-methyluridine(341) in tmRNA + S-adenosyl-L-homocysteine + H(+). Dual-specificity methyltransferase that catalyzes the formation of 5-methyluridine at position 54 (m5U54) in all tRNAs, and that of position 341 (m5U341) in tmRNA (transfer-mRNA). This chain is tRNA/tmRNA (uracil-C(5))-methyltransferase, found in Shewanella oneidensis (strain ATCC 700550 / JCM 31522 / CIP 106686 / LMG 19005 / NCIMB 14063 / MR-1).